A 145-amino-acid chain; its full sequence is Angiogenin-3 (145 aa).

The first 24 residues, 1–24 (MVMSPGSLLLVFLLSLDVIPPTLA), serve as a signal peptide directing secretion. Gln-25 is subject to Pyrrolidone carboxylic acid. The active-site Proton acceptor is His-37. Intrachain disulfides connect Cys-50–Cys-104, Cys-63–Cys-115, and Cys-81–Cys-130. Positions 55-59 (KKRKL) match the Nucleolar localization signal motif. Positions 65 and 106 each coordinate Zn(2+). His-137 functions as the Proton donor in the catalytic mechanism.

It belongs to the pancreatic ribonuclease family.

The protein localises to the cytoplasmic vesicle. The protein resides in the secretory vesicle lumen. It is found in the secreted. Its subcellular location is the nucleus. It localises to the nucleolus. Its activity is regulated as follows. Divalent metal ions, such as Cu2+ and Zn2+, may inhibit the ribonucleolytic activity. Its function is as follows. Has low ribonuclease activity (in vitro). The sequence is that of Angiogenin-3 (Ang3) from Mus musculus (Mouse).